Reading from the N-terminus, the 358-residue chain is NADH-quinone oxidoreductase subunit H (358 aa).

Transmembrane regions (helical) follow at residues 20–40, 95–115, 128–148, 168–188, 206–226, 253–273, 290–310, and 334–354; these read ITVG…IPLI, ALFY…WAVI, IGLL…IIAG, ISYE…SGSM, VFSW…ISAV, GFAF…ISAL, WGFI…AVLY, and VLIP…ISPL.

The protein belongs to the complex I subunit 1 family. In terms of assembly, NDH-1 is composed of 14 different subunits. Subunits NuoA, H, J, K, L, M, N constitute the membrane sector of the complex.

It localises to the cell inner membrane. It carries out the reaction a quinone + NADH + 5 H(+)(in) = a quinol + NAD(+) + 4 H(+)(out). In terms of biological role, NDH-1 shuttles electrons from NADH, via FMN and iron-sulfur (Fe-S) centers, to quinones in the respiratory chain. The immediate electron acceptor for the enzyme in this species is believed to be ubiquinone. Couples the redox reaction to proton translocation (for every two electrons transferred, four hydrogen ions are translocated across the cytoplasmic membrane), and thus conserves the redox energy in a proton gradient. This subunit may bind ubiquinone. This chain is NADH-quinone oxidoreductase subunit H, found in Neisseria meningitidis serogroup A / serotype 4A (strain DSM 15465 / Z2491).